The primary structure comprises 694 residues: DNA-binding protein RFX2 (694 aa).

Residues 174 to 249 (HLQWLLDNYE…YHYYGIRLKP (76 aa)) constitute a DNA-binding region (RFX-type winged-helix). 2 disordered regions span residues 268-309 (QPIH…SQHH) and 659-694 (DDVSELGSDNDGDPRISGQPPVKRERVDLNHSMQEM). Residues 288 to 299 (NTANSSQHTSPE) are compositionally biased toward polar residues. The span at 300–309 (QSVAAQSQHH) shows a compositional bias: low complexity.

The protein belongs to the RFX family. As to quaternary structure, homodimer. Heterodimer; heterodimerizes with other rfx proteins.

The protein resides in the nucleus. The protein localises to the cytoplasm. Transcription factor that acts as a key regulator of ciliogenesis. Specifically regulates expression of genes required for cilium assembly and function. Recognizes and binds the X-box, a regulatory motif with DNA sequence 5'-GTNRCC(0-3N)RGYAAC-3' present on promoters. Required for neural tube closure and neural ciliogenesis. The sequence is that of DNA-binding protein RFX2 (rfx2) from Xenopus tropicalis (Western clawed frog).